The following is a 195-amino-acid chain: Thymidine kinase (195 aa).

ATP contacts are provided by residues 15–22, glutamate 23, 57–58, and 88–91; these read GPMYSGKS, SH, and DEVQ. Residue glutamate 89 is the Proton acceptor of the active site. Residue phenylalanine 120 coordinates substrate. Zn(2+)-binding residues include cysteine 145 and cysteine 148. Substrate is bound at residue tyrosine 179. Zn(2+)-binding residues include cysteine 183 and cysteine 186.

It belongs to the thymidine kinase family.

It is found in the cytoplasm. It carries out the reaction thymidine + ATP = dTMP + ADP + H(+). This is Thymidine kinase from Clostridium acetobutylicum (strain ATCC 824 / DSM 792 / JCM 1419 / IAM 19013 / LMG 5710 / NBRC 13948 / NRRL B-527 / VKM B-1787 / 2291 / W).